A 392-amino-acid chain; its full sequence is 6-aminohexanoate-dimer hydrolase (392 aa).

Residues 1–27 are disordered; sequence MNTPTTGSHPARYPSAAAGEPTLDSWQ. Ser-112 is a catalytic residue.

The enzyme catalyses [N-(6-aminohexanoyl)](n) + H2O = [N-(6-aminohexanoyl)](n-1) + 6-aminohexanoate. The catalysed reaction is N-(6-aminohexanoyl)-6-aminohexanoate + H2O = 2 6-aminohexanoate. It functions in the pathway xenobiotic degradation; nylon-6 oligomer degradation. Involved in nylon oligomer degradation. The sequence is that of 6-aminohexanoate-dimer hydrolase from Paenarthrobacter ureafaciens.